The following is a 516-amino-acid chain: Squalene epoxidase 4 (516 aa).

2 helical membrane-spanning segments follow: residues 2-22 and 43-63; these read TYAW…FHLI and ATDV…YALA. FAD contacts are provided by residues 53–54, 73–74, Arg81, Arg153, Val169, Asp335, and Met348; these read VA and ER. The helical transmembrane segment at 435–455 threads the bilayer; sequence ILGGMNPHPLTLVLHLVAITL.

This sequence belongs to the squalene monooxygenase family. The cofactor is FAD. Expressed mainly in seedlings and inflorescences.

The protein localises to the membrane. It catalyses the reaction squalene + reduced [NADPH--hemoprotein reductase] + O2 = (S)-2,3-epoxysqualene + oxidized [NADPH--hemoprotein reductase] + H2O + H(+). It participates in terpene metabolism; lanosterol biosynthesis; lanosterol from farnesyl diphosphate: step 2/3. Its function is as follows. Catalyzes the stereospecific oxidation of squalene to (S)-2,3-epoxysqualene, and is considered to be a rate-limiting enzyme in steroid biosynthesis. This is Squalene epoxidase 4 (SQE4) from Arabidopsis thaliana (Mouse-ear cress).